Consider the following 209-residue polypeptide: NADH-ubiquinone oxidoreductase subunit 9 (209 aa).

It belongs to the complex I 30 kDa subunit family. In terms of assembly, complex I is composed of about 30 different subunits.

The protein resides in the mitochondrion inner membrane. It carries out the reaction a ubiquinone + NADH + 5 H(+)(in) = a ubiquinol + NAD(+) + 4 H(+)(out). Core subunit of the mitochondrial membrane respiratory chain NADH dehydrogenase (Complex I) that is believed to belong to the minimal assembly required for catalysis. Complex I functions in the transfer of electrons from NADH to the respiratory chain. The immediate electron acceptor for the enzyme is believed to be ubiquinone. In Paramecium tetraurelia, this protein is NADH-ubiquinone oxidoreductase subunit 9 (NAD9).